Consider the following 345-residue polypeptide: Trans-enoyl reductase tndF (345 aa).

A disordered region spans residues 1–26; the sequence is MAREHQAAILPQPGGPLSVGMRPTPK. NADP(+)-binding positions include 44–49, 168–171, 191–194, tyrosine 209, and 244–245; these read CDYYQR, SSSV, SPEH, and LD.

It belongs to the zinc-containing alcohol dehydrogenase family.

It participates in secondary metabolite biosynthesis; terpenoid biosynthesis. In terms of biological role, trans-enoyl reductase; part of the gene cluster that mediates the biosynthesis of talaronoid C, a fusicoccane diterpenoid with an unprecedented tricyclic 5/8/6 ring system. The first step in the pathway is performed by the fusicoccadiene synthase tndC that possesses both prenyl transferase and terpene cyclase activity, converting isopentenyl diphosphate and dimethylallyl diphosphate into geranylgeranyl diphosphate (GGDP) and further converting GGDP into talarodiene, a precursor for talaronoid C. The remaining enzymes from the cluster include the cytochrome P450 monooxygenase tndB, the aldehyde reductase tndE and the alcohol dehydrogenase tndF that are involved in the conversion of talarodiene into talaronoid C. This Aspergillus flavipes protein is Trans-enoyl reductase tndF.